The sequence spans 702 residues: Glucosidase 2 subunit beta (702 aa).

Residues 1–20 (MVSMFSLFLLLIEQSPLVAS) form the signal peptide. Asn-145 carries an N-linked (GlcNAc...) asparagine glycan. The stretch at 163–228 (SYREGKEALE…LRGEYFNQLS (66 aa)) forms a coiled coil. N-linked (GlcNAc...) asparagine glycans are attached at residues Asn-240 and Asn-358. Residues 435 to 457 (PKVLPPDAVESEQDTNSDHIGTS) form a disordered region. Residues 478–517 (KDLVSLEKRFRSCESQVSLLENELKQKMDYKKLLDETEDE) adopt a coiled-coil conformation. N-linked (GlcNAc...) asparagine glycans are attached at residues Asn-520 and Asn-525. The MRH domain occupies 537–689 (SYCLDDILDN…DVVGPLGCNK (153 aa)). Disulfide bonds link Cys-539-Cys-552, Cys-646-Cys-675, and Cys-660-Cys-687. 2 N-linked (GlcNAc...) asparagine glycosylation sites follow: Asn-688 and Asn-699.

Heterodimer of a catalytic subunit alpha (ROT2) and a subunit beta (GTB1).

It localises to the endoplasmic reticulum. Its function is as follows. Subunit of glucosidase 2, which cleaves sequentially the 2 innermost alpha-1,3-linked glucose residues from the Glc(2)Man(9)GlcNAc(2) oligosaccharide precursor of immature glycoproteins. Specifically required for the cleavage of the final glucose. This chain is Glucosidase 2 subunit beta (GTB1), found in Saccharomyces cerevisiae (strain ATCC 204508 / S288c) (Baker's yeast).